A 200-amino-acid chain; its full sequence is Mediator of RNA polymerase II transcription subunit 22 (200 aa).

Residues 93–122 are a coiled coil; it reads SVNEAIDQRNQQLRALQEECDRKLITLRDE. The interval 169 to 200 is disordered; it reads PLLASPETGAGPLQSAAPVHSHGGGPGPTEHT. Gly residues predominate over residues 190-200; the sequence is HGGGPGPTEHT.

Belongs to the Mediator complex subunit 22 family. Component of the Mediator complex, which is composed of MED1, MED4, MED6, MED7, MED8, MED9, MED10, MED11, MED12, MED13, MED13L, MED14, MED15, MED16, MED17, MED18, MED19, MED20, MED21, MED22, MED23, MED24, MED25, MED26, MED27, MED29, MED30, MED31, CCNC, CDK8 and CDC2L6/CDK11. The MED12, MED13, CCNC and CDK8 subunits form a distinct module termed the CDK8 module. Mediator containing the CDK8 module is less active than Mediator lacking this module in supporting transcriptional activation. Individual preparations of the Mediator complex lacking one or more distinct subunits have been variously termed ARC, CRSP, DRIP, PC2, SMCC and TRAP.

It is found in the nucleus. Its function is as follows. Component of the Mediator complex, a coactivator involved in the regulated transcription of nearly all RNA polymerase II-dependent genes. Mediator functions as a bridge to convey information from gene-specific regulatory proteins to the basal RNA polymerase II transcription machinery. Mediator is recruited to promoters by direct interactions with regulatory proteins and serves as a scaffold for the assembly of a functional preinitiation complex with RNA polymerase II and the general transcription factors. This Mus musculus (Mouse) protein is Mediator of RNA polymerase II transcription subunit 22 (Med22).